A 72-amino-acid polypeptide reads, in one-letter code: Translation initiation factor IF-1 (72 aa).

Positions Met1–Arg72 constitute an S1-like domain.

The protein belongs to the IF-1 family. In terms of assembly, component of the 30S ribosomal translation pre-initiation complex which assembles on the 30S ribosome in the order IF-2 and IF-3, IF-1 and N-formylmethionyl-tRNA(fMet); mRNA recruitment can occur at any time during PIC assembly.

It localises to the cytoplasm. One of the essential components for the initiation of protein synthesis. Stabilizes the binding of IF-2 and IF-3 on the 30S subunit to which N-formylmethionyl-tRNA(fMet) subsequently binds. Helps modulate mRNA selection, yielding the 30S pre-initiation complex (PIC). Upon addition of the 50S ribosomal subunit IF-1, IF-2 and IF-3 are released leaving the mature 70S translation initiation complex. This is Translation initiation factor IF-1 from Marinobacter nauticus (strain ATCC 700491 / DSM 11845 / VT8) (Marinobacter aquaeolei).